The primary structure comprises 368 residues: Phosphate acyltransferase (368 aa).

A disordered region spans residues 334-368 (EGSLEQAARDASGAGHASPIAGQPAEPYAAQSSKA).

It belongs to the PlsX family. Homodimer. Probably interacts with PlsY.

Its subcellular location is the cytoplasm. The catalysed reaction is a fatty acyl-[ACP] + phosphate = an acyl phosphate + holo-[ACP]. Its pathway is lipid metabolism; phospholipid metabolism. In terms of biological role, catalyzes the reversible formation of acyl-phosphate (acyl-PO(4)) from acyl-[acyl-carrier-protein] (acyl-ACP). This enzyme utilizes acyl-ACP as fatty acyl donor, but not acyl-CoA. The chain is Phosphate acyltransferase from Paraburkholderia xenovorans (strain LB400).